The chain runs to 798 residues: Vacuolar protein sorting-associated protein 53 homolog (798 aa).

This sequence belongs to the VPS53 family. Component of the Golgi-associated retrograde protein (GARP) complex, also called VFT (VPS fifty-three) complex, composed of vps-51, vps-52, vps-53 and vps-54. Within the complex interacts with vps-51, vps-52 and vps-54. Ubiquitously expressed, with particularly strong expression in neuronal cells. Specifically expressed in head and tail neurons and in the pharynx and ventral cord motor neurons.

The protein resides in the golgi apparatus. The protein localises to the trans-Golgi network membrane. It is found in the endosome membrane. Its subcellular location is the perikaryon. It localises to the cytoplasm. The protein resides in the perinuclear region. Acts as a component of the GARP complex that is involved in retrograde transport from early and late endosomes to the trans-Golgi network (TGN). The GARP complex facilitates tethering as well as SNARE complex assembly at the Golgi. Plays a role in the trafficking of cargo to dense-core vesicles, probably through association with the EARP-interacting protein eipr-1. Important for neuronal function. The protein is Vacuolar protein sorting-associated protein 53 homolog of Caenorhabditis elegans.